The chain runs to 481 residues: Velvet complex subunit B (481 aa).

Disordered stretches follow at residues 1-157 (MNSA…YSKI) and 241-339 (GTGA…NGYG). 3 stretches are compositionally biased toward pro residues: residues 36–45 (HPPPPLPPPS), 53–62 (PPLPPPPSAP), and 96–112 (PYAP…QYPR). In terms of domain architecture, Velvet spans 160 to 464 (GSGWKYSLDV…ANQGIKIPIR (305 aa)). Composition is skewed to low complexity over residues 241 to 255 (GTGA…TYSS) and 293 to 325 (QQSY…SAEP).

Belongs to the velvet family. VelB subfamily. As to quaternary structure, component of the heterotrimeric velvet complex composed of laeA, veA and velB; VeA acting as a bridging protein between laeA and velB. Forms a heterodimeric complex with vosA; the formation of the velB-vosA complex is light-dependent.

Its subcellular location is the nucleus. It is found in the cytoplasm. Functionally, component of the velvet transcription factor complex that controls sexual/asexual developmental ratio in response to light, promoting sexual development in the darkness while stimulating asexual sporulation under illumination. The velvet complex acts as a global regulator for secondary metabolite gene expression. Component of the velB-VosA heterodimeric complex that plays a dual role in activating genes associated with spore maturation and repressing certain development-associated genes. The velB-VosA complex binds DNA through the DNA-binding domain of vosA that recognizes an 11-nucleotide consensus sequence 5'-CTGGCCGCGGC-3' consisting of two motifs in the promoters of key developmental regulatory genes. Controls the biosynthetic gene cluster for beauvericin, a depsipeptide mycotoxin that functions as a virulence determinant. Also regulates chromatin structure and transcription of siderophore biosynthetic genes and is required for infection of tomato plants. The chain is Velvet complex subunit B from Fusarium oxysporum f. sp. lycopersici (strain 4287 / CBS 123668 / FGSC 9935 / NRRL 34936) (Fusarium vascular wilt of tomato).